We begin with the raw amino-acid sequence, 354 residues long: Serum paraoxonase/arylesterase 2 (354 aa).

Residue N29 is glycosylated (N-linked (GlcNAc...) asparagine). A disulfide bridge connects residues C42 and C352. The Ca(2+) site is built by E53 and D54. The Proton acceptor role is filled by H114. 4 residues coordinate Ca(2+): I116, N167, D168, and N223. A glycan (N-linked (GlcNAc...) asparagine) is linked at N254. D268 and N269 together coordinate Ca(2+). N-linked (GlcNAc...) asparagine glycans are attached at residues N269 and N323.

Belongs to the paraoxonase family. The cofactor is Ca(2+). Glycosylated. Post-translationally, the signal sequence is not cleaved.

It localises to the membrane. The enzyme catalyses a phenyl acetate + H2O = a phenol + acetate + H(+). It catalyses the reaction An aryl dialkyl phosphate + H2O = dialkyl phosphate + an aryl alcohol.. The absence of paraoxonase activity in turkey and chicken blood and in turkey liver indicates that PON2, if expressed, does not hydrolyze paraoxon. The chain is Serum paraoxonase/arylesterase 2 (PON2) from Gallus gallus (Chicken).